Consider the following 819-residue polypeptide: Proteome of basal body protein 15 (819 aa).

Composition is skewed to low complexity over residues 46-59 and 572-581; these read PASSPAKAPANPGR and RQQQQQQQHT. Disordered regions lie at residues 46-72 and 564-590; these read PASSPAKAPANPGRSAPPSPGPRLATG and ERQRRLLERQQQQQQQHTKGGGGGGGV. A coiled-coil region spans residues 546 to 580; sequence YVVLREAVARVQARMEQQERQRRLLERQQQQQQQH.

The protein localises to the cytoplasm. Its subcellular location is the cytoskeleton. The protein resides in the microtubule organizing center. It is found in the centrosome. It localises to the centriole. This is Proteome of basal body protein 15 from Chlamydomonas reinhardtii (Chlamydomonas smithii).